Reading from the N-terminus, the 192-residue chain is Fe/S biogenesis protein NfuA (192 aa).

Residues C149 and C152 each coordinate [4Fe-4S] cluster.

Belongs to the NfuA family. As to quaternary structure, homodimer. Requires [4Fe-4S] cluster as cofactor.

In terms of biological role, involved in iron-sulfur cluster biogenesis. Binds a 4Fe-4S cluster, can transfer this cluster to apoproteins, and thereby intervenes in the maturation of Fe/S proteins. Could also act as a scaffold/chaperone for damaged Fe/S proteins. The sequence is that of Fe/S biogenesis protein NfuA from Shewanella amazonensis (strain ATCC BAA-1098 / SB2B).